Here is a 161-residue protein sequence, read N- to C-terminus: Ribosome maturation factor RimP (161 aa).

It belongs to the RimP family.

The protein localises to the cytoplasm. Required for maturation of 30S ribosomal subunits. This chain is Ribosome maturation factor RimP, found in Herminiimonas arsenicoxydans.